Reading from the N-terminus, the 324-residue chain is Annexin A10 (324 aa).

Annexin repeat units follow at residues 17-88 (FNPI…GLMY), 89-160 (PPPL…NLVQ), 171-243 (AMAA…AIVL), and 247-318 (DKPA…AICA).

This sequence belongs to the annexin family.

This chain is Annexin A10 (ANXA10), found in Homo sapiens (Human).